A 505-amino-acid chain; its full sequence is Deoxyguanosinetriphosphate triphosphohydrolase (505 aa).

Residues 66–273 (RLTHSMEVQQ…MEAADDISYC (208 aa)) enclose the HD domain.

Belongs to the dGTPase family. Type 1 subfamily. In terms of assembly, homotetramer. Requires Mg(2+) as cofactor.

The catalysed reaction is dGTP + H2O = 2'-deoxyguanosine + triphosphate + H(+). Its function is as follows. dGTPase preferentially hydrolyzes dGTP over the other canonical NTPs. This Escherichia coli O139:H28 (strain E24377A / ETEC) protein is Deoxyguanosinetriphosphate triphosphohydrolase.